Here is a 603-residue protein sequence, read N- to C-terminus: Prostaglandin G/H synthase 1 (603 aa).

The signal sequence occupies residues 1–27 (MSRGSRLHRWPLLLLLLLLLPPPPVLP). The EGF-like domain maps to 35 to 73 (PVNPCCYYPCQHQGICVRFGLDRYQCDCTRTGYSGPNCT). Intrachain disulfides connect cysteine 39-cysteine 50, cysteine 40-cysteine 162, cysteine 44-cysteine 60, and cysteine 62-cysteine 72. N-linked (GlcNAc...) asparagine glycans are attached at residues asparagine 71, asparagine 107, and asparagine 147. Histidine 210 (proton acceptor) is an active-site residue. Tyrosine 388 (for cyclooxygenase activity) is an active-site residue. Histidine 391 is a heme b binding site. Cysteine 572 and cysteine 578 are joined by a disulfide.

It belongs to the prostaglandin G/H synthase family. Homodimer. The cofactor is heme b. In terms of processing, N-glycosylated. N-linked glycosylation is necessary for enzymatic activity. As to expression, brain cortex. Isoform 2 is expressed in the cerebral cortex and heart.

It localises to the microsome membrane. Its subcellular location is the endoplasmic reticulum membrane. The catalysed reaction is (5Z,8Z,11Z,14Z)-eicosatetraenoate + AH2 + 2 O2 = prostaglandin H2 + A + H2O. It carries out the reaction (5Z,8Z,11Z,14Z)-eicosatetraenoate + 2 O2 = prostaglandin G2. The enzyme catalyses prostaglandin G2 + AH2 = prostaglandin H2 + A + H2O. It catalyses the reaction (9Z,12Z)-octadecadienoate + AH2 + O2 = (9R)-hydroxy-(10E,12Z)-octadecadienoate + A + H2O. The catalysed reaction is (9Z,12Z)-octadecadienoate + AH2 + O2 = (9S)-hydroxy-(10E,12Z)-octadecadienoate + A + H2O. It carries out the reaction (9Z,12Z)-octadecadienoate + AH2 + O2 = (13S)-hydroxy-(9Z,11E)-octadecadienoate + A + H2O. The enzyme catalyses (9Z,12Z)-octadecadienoate + AH2 + O2 = (13R)-hydroxy-(9Z,11E)-octadecadienoate + A + H2O. Its pathway is lipid metabolism; prostaglandin biosynthesis. With respect to regulation, the cyclooxygenase activity is inhibited by nonsteroidal anti-inflammatory drugs (NSAIDs) including ibuprofen, flurbiprofen, ketoprofen, naproxen, flurbiprofen, anirolac, fenclofenac and diclofenac. In terms of biological role, dual cyclooxygenase and peroxidase that plays an important role in the biosynthesis pathway of prostanoids, a class of C20 oxylipins mainly derived from arachidonate ((5Z,8Z,11Z,14Z)-eicosatetraenoate, AA, C20:4(n-6)), with a particular role in the inflammatory response. The cyclooxygenase activity oxygenates AA to the hydroperoxy endoperoxide prostaglandin G2 (PGG2), and the peroxidase activity reduces PGG2 to the hydroxy endoperoxide prostaglandin H2 (PGH2), the precursor of all 2-series prostaglandins and thromboxanes. This complex transformation is initiated by abstraction of hydrogen at carbon 13 (with S-stereochemistry), followed by insertion of molecular O2 to form the endoperoxide bridge between carbon 9 and 11 that defines prostaglandins. The insertion of a second molecule of O2 (bis-oxygenase activity) yields a hydroperoxy group in PGG2 that is then reduced to PGH2 by two electrons. Involved in the constitutive production of prostanoids in particular in the stomach and platelets. In gastric epithelial cells, it is a key step in the generation of prostaglandins, such as prostaglandin E2 (PGE2), which plays an important role in cytoprotection. In platelets, it is involved in the generation of thromboxane A2 (TXA2), which promotes platelet activation and aggregation, vasoconstriction and proliferation of vascular smooth muscle cells. Can also use linoleate (LA, (9Z,12Z)-octadecadienoate, C18:2(n-6)) as substrate and produce hydroxyoctadecadienoates (HODEs) in a regio- and stereospecific manner, being (9R)-HODE ((9R)-hydroxy-(10E,12Z)-octadecadienoate) and (13S)-HODE ((13S)-hydroxy-(9Z,11E)-octadecadienoate) its major products. The chain is Prostaglandin G/H synthase 1 (PTGS1) from Canis lupus familiaris (Dog).